A 123-amino-acid chain; its full sequence is Small ribosomal subunit protein uS12 (123 aa).

Aspartate 89 carries the 3-methylthioaspartic acid modification. Residues 104–123 are disordered; the sequence is SVGVKDRKKSRSKYGAKRPK. Over residues 109-123 the composition is skewed to basic residues; it reads DRKKSRSKYGAKRPK.

The protein belongs to the universal ribosomal protein uS12 family. Part of the 30S ribosomal subunit. Contacts proteins S8 and S17. May interact with IF1 in the 30S initiation complex.

In terms of biological role, with S4 and S5 plays an important role in translational accuracy. Interacts with and stabilizes bases of the 16S rRNA that are involved in tRNA selection in the A site and with the mRNA backbone. Located at the interface of the 30S and 50S subunits, it traverses the body of the 30S subunit contacting proteins on the other side and probably holding the rRNA structure together. The combined cluster of proteins S8, S12 and S17 appears to hold together the shoulder and platform of the 30S subunit. This chain is Small ribosomal subunit protein uS12, found in Geotalea daltonii (strain DSM 22248 / JCM 15807 / FRC-32) (Geobacter daltonii).